The chain runs to 367 residues: Probable butyrate kinase (367 aa).

This sequence belongs to the acetokinase family.

The protein localises to the cytoplasm. It carries out the reaction butanoate + ATP = butanoyl phosphate + ADP. The sequence is that of Probable butyrate kinase from Bacillus anthracis (strain A0248).